We begin with the raw amino-acid sequence, 264 residues long: Protein Saci_1508 (264 aa).

This sequence belongs to the CinA family.

This Sulfolobus acidocaldarius (strain ATCC 33909 / DSM 639 / JCM 8929 / NBRC 15157 / NCIMB 11770) protein is Protein Saci_1508.